Here is a 339-residue protein sequence, read N- to C-terminus: Ketol-acid reductoisomerase (NADP(+)) (339 aa).

The 182-residue stretch at 1–182 (MRVYYDRDAD…GGGRSGVIET (182 aa)) folds into the KARI N-terminal Rossmann domain. NADP(+) is bound by residues 24–27 (YGSQ), Arg48, Ser51, Thr53, and 83–86 (DELQ). His108 is an active-site residue. Gly134 is a binding site for NADP(+). One can recognise a KARI C-terminal knotted domain in the interval 183–328 (TFKEECETDL…GKLRAMMPWI (146 aa)). Mg(2+)-binding residues include Asp191, Glu195, Glu227, and Glu231. A substrate-binding site is contributed by Ser252.

The protein belongs to the ketol-acid reductoisomerase family. It depends on Mg(2+) as a cofactor.

The catalysed reaction is (2R)-2,3-dihydroxy-3-methylbutanoate + NADP(+) = (2S)-2-acetolactate + NADPH + H(+). It carries out the reaction (2R,3R)-2,3-dihydroxy-3-methylpentanoate + NADP(+) = (S)-2-ethyl-2-hydroxy-3-oxobutanoate + NADPH + H(+). The protein operates within amino-acid biosynthesis; L-isoleucine biosynthesis; L-isoleucine from 2-oxobutanoate: step 2/4. It participates in amino-acid biosynthesis; L-valine biosynthesis; L-valine from pyruvate: step 2/4. Functionally, involved in the biosynthesis of branched-chain amino acids (BCAA). Catalyzes an alkyl-migration followed by a ketol-acid reduction of (S)-2-acetolactate (S2AL) to yield (R)-2,3-dihydroxy-isovalerate. In the isomerase reaction, S2AL is rearranged via a Mg-dependent methyl migration to produce 3-hydroxy-3-methyl-2-ketobutyrate (HMKB). In the reductase reaction, this 2-ketoacid undergoes a metal-dependent reduction by NADPH to yield (R)-2,3-dihydroxy-isovalerate. This is Ketol-acid reductoisomerase (NADP(+)) from Brucella canis (strain ATCC 23365 / NCTC 10854 / RM-666).